Consider the following 353-residue polypeptide: MKGNGSTLLNASQQAPGVGEGGGPRPSWLASTLAFILIFTIVVDILGNLLVILSVYRNKKLRNAGNIFVVSLAIADLVVAIYPYPLVLTSIFNNGWNLGYLHCQISAFLMGLSVIGSIFNITGIAINRYCYICHSLKYDRLYSNKNSLCYVFLIWVLTLVAIMPNLQTGTLQYDPRIYSCTFTQSVSSAYTIAVVVFHFIVPMIIVIFCYLRIWILVLQVRRRVKPDSKPRLKPQDFRNFVTMFVVFVLFAICWAPLNFIGLIVASDPATMAPRIPEWLFVASYYMAYFNSCLNAIIYGLLNQNFRQEYKRILVSLFTAKMCFVDSSNDPADKIKCKPAPLIANNNLIKVDSV.

Residues 1-15 (MKGNGSTLLNASQQA) are compositionally biased toward polar residues. The disordered stretch occupies residues 1–23 (MKGNGSTLLNASQQAPGVGEGGG). Residues 1 to 32 (MKGNGSTLLNASQQAPGVGEGGGPRPSWLAST) are Extracellular-facing. N-linked (GlcNAc...) asparagine glycosylation is found at Asn-4 and Asn-10. Residues 33-53 (LAFILIFTIVVDILGNLLVIL) form a helical membrane-spanning segment. The Cytoplasmic segment spans residues 54-66 (SVYRNKKLRNAGN). A helical transmembrane segment spans residues 67–87 (IFVVSLAIADLVVAIYPYPLV). Residues 88 to 105 (LTSIFNNGWNLGYLHCQI) lie on the Extracellular side of the membrane. Cys-103 and Cys-180 are joined by a disulfide. Residues 106–126 (SAFLMGLSVIGSIFNITGIAI) traverse the membrane as a helical segment. The Cytoplasmic segment spans residues 127 to 147 (NRYCYICHSLKYDRLYSNKNS). Residues 148–168 (LCYVFLIWVLTLVAIMPNLQT) form a helical membrane-spanning segment. Residues 169 to 190 (GTLQYDPRIYSCTFTQSVSSAY) are Extracellular-facing. The helical transmembrane segment at 191–211 (TIAVVVFHFIVPMIIVIFCYL) threads the bilayer. Residues 212-243 (RIWILVLQVRRRVKPDSKPRLKPQDFRNFVTM) are Cytoplasmic-facing. The chain crosses the membrane as a helical span at residues 244-264 (FVVFVLFAICWAPLNFIGLIV). The Extracellular portion of the chain corresponds to 265–277 (ASDPATMAPRIPE). A helical membrane pass occupies residues 278–298 (WLFVASYYMAYFNSCLNAIIY). Residues 299 to 353 (GLLNQNFRQEYKRILVSLFTAKMCFVDSSNDPADKIKCKPAPLIANNNLIKVDSV) lie on the Cytoplasmic side of the membrane.

The protein belongs to the G-protein coupled receptor 1 family. In terms of tissue distribution, at least in the brain, more precisely in the pars tuberalis and the suprachiasmatic nucleus.

It localises to the cell membrane. Functionally, high affinity receptor for melatonin. Likely to mediate the reproductive and circadian actions of melatonin. The activity of this receptor is mediated by pertussis toxin sensitive G proteins that inhibit adenylate cyclase activity. Possibly involved in sleep induction, by melatonin activation of the potassium channel KCNMA1/BK and the dissociation of G-beta and G-gamma subunits, thereby decreasing synaptic transmission. The sequence is that of Melatonin receptor type 1A (MTNR1A) from Phodopus sungorus (Striped hairy-footed hamster).